The following is a 130-amino-acid chain: 3-hydroxyisobutyrate dehydrogenase, mitochondrial (130 aa).

NAD(+) contacts are provided by residues 1–17 (TPVG…PMAK), 25–26 (LP), and N30. K43 bears the N6-acetyllysine mark. The residue at position 47 (K47) is an N6-acetyllysine; alternate. The residue at position 47 (K47) is an N6-succinyllysine; alternate. Residue K101 is modified to N6-succinyllysine.

Belongs to the HIBADH-related family. 3-hydroxyisobutyrate dehydrogenase subfamily. As to quaternary structure, homodimer.

It is found in the mitochondrion. The enzyme catalyses 3-hydroxy-2-methylpropanoate + NAD(+) = 2-methyl-3-oxopropanoate + NADH + H(+). Its pathway is amino-acid degradation; L-valine degradation. In Mesocricetus auratus (Golden hamster), this protein is 3-hydroxyisobutyrate dehydrogenase, mitochondrial.